The following is a 376-amino-acid chain: Aminomethyltransferase (376 aa).

It belongs to the GcvT family. The glycine cleavage system is composed of four proteins: P, T, L and H.

The catalysed reaction is N(6)-[(R)-S(8)-aminomethyldihydrolipoyl]-L-lysyl-[protein] + (6S)-5,6,7,8-tetrahydrofolate = N(6)-[(R)-dihydrolipoyl]-L-lysyl-[protein] + (6R)-5,10-methylene-5,6,7,8-tetrahydrofolate + NH4(+). In terms of biological role, the glycine cleavage system catalyzes the degradation of glycine. The polypeptide is Aminomethyltransferase (Nostoc sp. (strain PCC 7120 / SAG 25.82 / UTEX 2576)).